The sequence spans 338 residues: Nuclear hormone receptor family member nhr-52 (338 aa).

The nuclear receptor DNA-binding region spans 1 to 75 (MKCLVCCSYA…IGMRFSEPKQ (75 aa)). 2 NR C4-type zinc fingers span residues 3–23 (CLVCCSYASSRNFGALSCSAC) and 39–63 (CKYDKKCFESFTILPKCQFCRFKKC). One can recognise an NR LBD domain in the interval 98–337 (KDGVHYSNFL…KKLVNDIIIR (240 aa)).

Belongs to the nuclear hormone receptor family.

It localises to the nucleus. Functionally, orphan nuclear receptor. The protein is Nuclear hormone receptor family member nhr-52 (nhr-52) of Caenorhabditis elegans.